The following is a 468-amino-acid chain: UDP-N-acetylmuramate--L-alanine ligase (468 aa).

ATP is bound at residue 114–120 (GTHGKTT).

This sequence belongs to the MurCDEF family.

The protein localises to the cytoplasm. It catalyses the reaction UDP-N-acetyl-alpha-D-muramate + L-alanine + ATP = UDP-N-acetyl-alpha-D-muramoyl-L-alanine + ADP + phosphate + H(+). It functions in the pathway cell wall biogenesis; peptidoglycan biosynthesis. In terms of biological role, cell wall formation. The chain is UDP-N-acetylmuramate--L-alanine ligase from Methylorubrum populi (strain ATCC BAA-705 / NCIMB 13946 / BJ001) (Methylobacterium populi).